Reading from the N-terminus, the 460-residue chain is Biphenyl 2,3-dioxygenase subunit alpha (460 aa).

The 110-residue stretch at 56 to 165 (WLLMGHETQI…VETYKGLIFA (110 aa)) folds into the Rieske domain. Residues Cys98, His100, Cys118, and His121 each contribute to the [2Fe-2S] cluster site. 217 to 230 (QFCSDMYHAGTTSH) lines the substrate pocket. His224, His230, and Asp378 together coordinate Fe cation.

This sequence belongs to the bacterial ring-hydroxylating dioxygenase alpha subunit family. In terms of assembly, heterohexamer consisting of three BphA1 subunits and three BphA2 subunits. The multicomponent biphenyl dioxygenase system is composed of a ferredoxin reductase (BphA4), a ferredoxin (BphA3), and a terminal oxygenase (BphA1A2). [2Fe-2S] cluster serves as cofactor. The cofactor is Fe cation.

The catalysed reaction is biphenyl + NADH + O2 + H(+) = (2R,3S)-3-phenylcyclohexa-3,5-diene-1,2-diol + NAD(+). It participates in xenobiotic degradation; biphenyl degradation; 2-hydroxy-2,4-pentadienoate and benzoate from biphenyl: step 1/4. In terms of biological role, part of the oxygenase component of the biphenyl dioxygenase system that catalyzes the stereospecific dihydroxylation of the aromatic ring of biphenyl, yielding a dihydrodiol compound. Is essential for biphenyl degradation and growth of Rhodococcus sp. strain RHA1 on biphenyl as the sole source of carbon and energy. Can also use naphtalene and 4-chlorobiphenyl (4-CB) as substrates, as well as some polychlorinated biphenyls (PCB) such as 2,2'-dichlorobiphenyl, 2,3-dichlorobiphenyl and 2,5,2'-trichlorobiphenyl. Exhibits weak activity toward dibenzofuran and dibenzo-p-dioxin. Electrons are transferred from NADH to the [2Fe-2S] cluster in BphA1 via FAD of BphA4 and [2Fe-2S] cluster of BphA3. This chain is Biphenyl 2,3-dioxygenase subunit alpha, found in Rhodococcus jostii (strain RHA1).